We begin with the raw amino-acid sequence, 734 residues long: Photosystem I P700 chlorophyll a apoprotein A2 (734 aa).

8 consecutive transmembrane segments (helical) span residues Ile-46–Ala-69, Leu-135–Gln-158, Leu-175–Ile-199, Ile-273–Tyr-291, Leu-330–Tyr-353, Ala-369–Ile-395, Ala-417–His-439, and Phe-517–Val-535. 2 residues coordinate [4Fe-4S] cluster: Cys-559 and Cys-568. Helical transmembrane passes span Ala-575 to Trp-596 and Leu-643 to Ile-665. Residues His-654, Met-662, and Tyr-670 each contribute to the chlorophyll a site. Trp-671 lines the phylloquinone pocket. The helical transmembrane segment at Leu-707–Ala-727 threads the bilayer.

The protein belongs to the PsaA/PsaB family. As to quaternary structure, the PsaA/B heterodimer binds the P700 chlorophyll special pair and subsequent electron acceptors. PSI consists of a core antenna complex that captures photons, and an electron transfer chain that converts photonic excitation into a charge separation. The eukaryotic PSI reaction center is composed of at least 11 subunits. The cofactor is P700 is a chlorophyll a/chlorophyll a' dimer, A0 is one or more chlorophyll a, A1 is one or both phylloquinones and FX is a shared 4Fe-4S iron-sulfur center..

The protein resides in the plastid. Its subcellular location is the chloroplast thylakoid membrane. It carries out the reaction reduced [plastocyanin] + hnu + oxidized [2Fe-2S]-[ferredoxin] = oxidized [plastocyanin] + reduced [2Fe-2S]-[ferredoxin]. In terms of biological role, psaA and PsaB bind P700, the primary electron donor of photosystem I (PSI), as well as the electron acceptors A0, A1 and FX. PSI is a plastocyanin-ferredoxin oxidoreductase, converting photonic excitation into a charge separation, which transfers an electron from the donor P700 chlorophyll pair to the spectroscopically characterized acceptors A0, A1, FX, FA and FB in turn. Oxidized P700 is reduced on the lumenal side of the thylakoid membrane by plastocyanin. The chain is Photosystem I P700 chlorophyll a apoprotein A2 from Huperzia lucidula (Shining clubmoss).